The primary structure comprises 206 residues: Stage III sporulation protein AF (206 aa).

The next 2 helical transmembrane spans lie at Met-1–Ile-21 and Ala-34–Phe-54.

It is found in the cell membrane. This chain is Stage III sporulation protein AF (spoIIIAF), found in Bacillus subtilis (strain 168).